A 124-amino-acid polypeptide reads, in one-letter code: Large ribosomal subunit protein bL12 (124 aa).

Belongs to the bacterial ribosomal protein bL12 family. As to quaternary structure, homodimer. Part of the ribosomal stalk of the 50S ribosomal subunit. Forms a multimeric L10(L12)X complex, where L10 forms an elongated spine to which 2 to 4 L12 dimers bind in a sequential fashion. Binds GTP-bound translation factors.

In terms of biological role, forms part of the ribosomal stalk which helps the ribosome interact with GTP-bound translation factors. Is thus essential for accurate translation. This chain is Large ribosomal subunit protein bL12, found in Borreliella afzelii (strain PKo) (Borrelia afzelii).